Reading from the N-terminus, the 244-residue chain is Thiol S-methyltransferase TMT1B (244 aa).

Positions 1-23 (MDALVLFLQLLVLLLTLPLHLLA) are cleaved as a signal peptide.

Belongs to the methyltransferase superfamily.

The protein localises to the endoplasmic reticulum membrane. Its subcellular location is the lipid droplet. It is found in the microsome. It localises to the cytoplasm. The protein resides in the cytosol. It carries out the reaction a thiol + S-adenosyl-L-methionine = a methyl thioether + S-adenosyl-L-homocysteine + H(+). Functionally, thiol S-methyltransferase that catalyzes the transfer of a methyl group from S-adenosyl-L-methionine to alkyl and phenolic thiol-containing acceptor substrates. Together with TMT1B accounts for most of S-thiol methylation activity in the endoplasmic reticulum of hepatocytes. Selectively methylates S-centered nucleophiles from metabolites such as hydrogen sulfide and dithiothreitol. The chain is Thiol S-methyltransferase TMT1B from Mus musculus (Mouse).